Reading from the N-terminus, the 289-residue chain is Lipoyl synthase 1 (289 aa).

[4Fe-4S] cluster contacts are provided by Cys33, Cys38, Cys44, Cys59, Cys63, Cys66, and Ser274. The Radical SAM core domain maps to 45-263 (FAGGTATFLI…RIGEEELGFL (219 aa)).

The protein belongs to the radical SAM superfamily. Lipoyl synthase family. Requires [4Fe-4S] cluster as cofactor.

The protein resides in the cytoplasm. The catalysed reaction is [[Fe-S] cluster scaffold protein carrying a second [4Fe-4S](2+) cluster] + N(6)-octanoyl-L-lysyl-[protein] + 2 oxidized [2Fe-2S]-[ferredoxin] + 2 S-adenosyl-L-methionine + 4 H(+) = [[Fe-S] cluster scaffold protein] + N(6)-[(R)-dihydrolipoyl]-L-lysyl-[protein] + 4 Fe(3+) + 2 hydrogen sulfide + 2 5'-deoxyadenosine + 2 L-methionine + 2 reduced [2Fe-2S]-[ferredoxin]. Its pathway is protein modification; protein lipoylation via endogenous pathway; protein N(6)-(lipoyl)lysine from octanoyl-[acyl-carrier-protein]: step 2/2. Its function is as follows. Catalyzes the radical-mediated insertion of two sulfur atoms into the C-6 and C-8 positions of the octanoyl moiety bound to the lipoyl domains of lipoate-dependent enzymes, thereby converting the octanoylated domains into lipoylated derivatives. In Parasynechococcus marenigrum (strain WH8102), this protein is Lipoyl synthase 1.